The following is a 548-amino-acid chain: Chaperonin GroEL 1 (548 aa).

Residues Thr30 to Pro33, Lys51, Asp87 to Thr91, Gly415, Asn479 to Ala481, and Asp495 each bind ATP.

This sequence belongs to the chaperonin (HSP60) family. As to quaternary structure, forms a cylinder of 14 subunits composed of two heptameric rings stacked back-to-back. Interacts with the co-chaperonin GroES.

It localises to the cytoplasm. The catalysed reaction is ATP + H2O + a folded polypeptide = ADP + phosphate + an unfolded polypeptide.. In terms of biological role, together with its co-chaperonin GroES, plays an essential role in assisting protein folding. The GroEL-GroES system forms a nano-cage that allows encapsulation of the non-native substrate proteins and provides a physical environment optimized to promote and accelerate protein folding. The chain is Chaperonin GroEL 1 from Vibrio harveyi (Beneckea harveyi).